The sequence spans 564 residues: MSNDEFSDNERLKQQSQLLRGTIKEDLHNELTGGFLGDNFQLIRFHGMYQQDDRDIRQERAAQMLEPLHTVMLRVRLPGGIISPQQWLGIDEFASQHTLYGSIRITNRQALQLHGVLKRNIKPVHRLLHQLGLDSRATAGDVNRNVLCTSNPVESRLHHQAYEWAKKISEHLLPKTNAYAEVWLDGEKIAQPEEEPILGNNYLPRKFKTAVVIPPQNDVDLHANDLNFIAIGDNGQLTGFNVLVGGGLAMTHGDQSTYPRLATELGYIPLNATLAVATAVVATQRDLGNRANRRNAKTKYTIDRLGIEVFKAEVELRAGLAFQPLRPYAFSSRGDRIGWVEGIDGKHHLTLFIPSGRLIDKPGKPLKSGLAAIAAVHTGDFRLTPNQNIIIAGVSERNRAQIDALAQRYSLIDDTVSPQRKSAMACVSYPTCPLAMAEAERVLPDIVDRLDAILIRNGIADRDVIFRVTGCPNGCGRAMLAEIGLVGRAVGRYDIYLGGNREGTRIPRLYKENQPLEEIIRDLDALLSAWAQADNPDEAFGDFAIQTGIIRPVLNSSIDFYLQD.

Residues C426, C432, C471, and C475 each contribute to the [4Fe-4S] cluster site. C475 contributes to the siroheme binding site.

This sequence belongs to the nitrite and sulfite reductase 4Fe-4S domain family. In terms of assembly, alpha(8)-beta(8). The alpha component is a flavoprotein, the beta component is a hemoprotein. The cofactor is siroheme. It depends on [4Fe-4S] cluster as a cofactor.

It carries out the reaction hydrogen sulfide + 3 NADP(+) + 3 H2O = sulfite + 3 NADPH + 4 H(+). The protein operates within sulfur metabolism; hydrogen sulfide biosynthesis; hydrogen sulfide from sulfite (NADPH route): step 1/1. Functionally, component of the sulfite reductase complex that catalyzes the 6-electron reduction of sulfite to sulfide. This is one of several activities required for the biosynthesis of L-cysteine from sulfate. This is Sulfite reductase [NADPH] hemoprotein beta-component 2 from Klebsiella pneumoniae (strain 342).